The following is an 874-amino-acid chain: Probable inorganic carbon transporter subunit DabA (874 aa).

Residues Cys398, Asp400, His580, and Cys595 each coordinate Zn(2+).

This sequence belongs to the inorganic carbon transporter (TC 9.A.2) DabA family. Forms a complex with DabB. It depends on Zn(2+) as a cofactor.

Its subcellular location is the cell membrane. Functionally, part of an energy-coupled inorganic carbon pump. This chain is Probable inorganic carbon transporter subunit DabA, found in Bacillus thuringiensis subsp. konkukian (strain 97-27).